Consider the following 151-residue polypeptide: Transcriptional repressor NrdR (151 aa).

A zinc finger lies at 3-34 (CPYCGSLDNKVIDSRLSRDDTETRRRRECLEC). One can recognise an ATP-cone domain in the interval 49–139 (LMIVKKDGRR…VYREFKDVHD (91 aa)).

This sequence belongs to the NrdR family. Requires Zn(2+) as cofactor.

Its function is as follows. Negatively regulates transcription of bacterial ribonucleotide reductase nrd genes and operons by binding to NrdR-boxes. The sequence is that of Transcriptional repressor NrdR from Desulfosudis oleivorans (strain DSM 6200 / JCM 39069 / Hxd3) (Desulfococcus oleovorans).